The sequence spans 420 residues: UDP-N-acetylglucosamine 1-carboxyvinyltransferase (420 aa).

22–23 (KN) lines the phosphoenolpyruvate pocket. Position 94 (Arg94) interacts with UDP-N-acetyl-alpha-D-glucosamine. Residue Cys118 is the Proton donor of the active site. Cys118 is subject to 2-(S-cysteinyl)pyruvic acid O-phosphothioketal. Asp307 and Ile329 together coordinate UDP-N-acetyl-alpha-D-glucosamine.

Belongs to the EPSP synthase family. MurA subfamily.

The protein resides in the cytoplasm. The enzyme catalyses phosphoenolpyruvate + UDP-N-acetyl-alpha-D-glucosamine = UDP-N-acetyl-3-O-(1-carboxyvinyl)-alpha-D-glucosamine + phosphate. Its pathway is cell wall biogenesis; peptidoglycan biosynthesis. In terms of biological role, cell wall formation. Adds enolpyruvyl to UDP-N-acetylglucosamine. The polypeptide is UDP-N-acetylglucosamine 1-carboxyvinyltransferase (Granulibacter bethesdensis (strain ATCC BAA-1260 / CGDNIH1)).